Consider the following 257-residue polypeptide: UPF0246 protein YaaA (257 aa).

Belongs to the UPF0246 family.

The chain is UPF0246 protein YaaA from Salmonella arizonae (strain ATCC BAA-731 / CDC346-86 / RSK2980).